A 403-amino-acid polypeptide reads, in one-letter code: Chromatin structure-remodeling complex subunit SFH1 (403 aa).

A disordered region spans residues 58-115 (FPTFDIDSDSNDEEQSSASAGNDDPQANANGGEAAGVNGQGSGDGGSANTGAGRHGKS). The segment covering 63–72 (IDSDSNDEEQ) has biased composition (acidic residues). Residues 84–94 (ANANGGEAAGV) are compositionally biased toward low complexity. The span at 95 to 105 (NGQGSGDGGSA) shows a compositional bias: gly residues.

It belongs to the SNF5 family.

It localises to the nucleus. In terms of biological role, part of the chromatin structure-remodeling complex (RSC) which is involved in transcription regulation and nucleosome positioning. RSC is responsible for the transfer of a histone octamer from a nucleosome core particle to naked DNA. The reaction requires ATP and involves an activated RSC-nucleosome intermediate. Remodeling reaction also involves DNA translocation, DNA twist and conformational change. As a reconfigurer of centromeric and flanking nucleosomes, RSC complex is required both for proper kinetochore function in chromosome segregation and, via a PKC1-dependent signaling pathway, for organization of the cellular cytoskeleton. This subunit is essential for mitotic growth and required for cell cycle progression. This is Chromatin structure-remodeling complex subunit SFH1 (SFH1) from Candida glabrata (strain ATCC 2001 / BCRC 20586 / JCM 3761 / NBRC 0622 / NRRL Y-65 / CBS 138) (Yeast).